The chain runs to 701 residues: Elongation factor G (701 aa).

The tr-type G domain occupies 6–286; it reads KFTRNIGIAA…YVMELLPSPL (281 aa). GTP-binding positions include 15 to 22, 83 to 87, and 137 to 140; these read AHIDAGKT, DTPGH, and NKMD.

The protein belongs to the TRAFAC class translation factor GTPase superfamily. Classic translation factor GTPase family. EF-G/EF-2 subfamily.

The protein localises to the cytoplasm. Catalyzes the GTP-dependent ribosomal translocation step during translation elongation. During this step, the ribosome changes from the pre-translocational (PRE) to the post-translocational (POST) state as the newly formed A-site-bound peptidyl-tRNA and P-site-bound deacylated tRNA move to the P and E sites, respectively. Catalyzes the coordinated movement of the two tRNA molecules, the mRNA and conformational changes in the ribosome. In Cytophaga hutchinsonii (strain ATCC 33406 / DSM 1761 / CIP 103989 / NBRC 15051 / NCIMB 9469 / D465), this protein is Elongation factor G.